A 1249-amino-acid polypeptide reads, in one-letter code: ATP-dependent helicase/nuclease subunit A (1249 aa).

The 478-residue stretch at 5–482 (TNYTPSQQAV…IVLAENFRSV (478 aa)) folds into the UvrD-like helicase ATP-binding domain. ATP is bound at residue 26 to 33 (ASAGSGKT). The UvrD-like helicase C-terminal domain maps to 521 to 811 (ADMPQTTNLL…NVMTIHGSKG (291 aa)).

It belongs to the helicase family. AddA subfamily. As to quaternary structure, heterodimer of AddA and AddB/RexB. The cofactor is Mg(2+).

It catalyses the reaction Couples ATP hydrolysis with the unwinding of duplex DNA by translocating in the 3'-5' direction.. The catalysed reaction is ATP + H2O = ADP + phosphate + H(+). Functionally, the heterodimer acts as both an ATP-dependent DNA helicase and an ATP-dependent, dual-direction single-stranded exonuclease. Recognizes the chi site generating a DNA molecule suitable for the initiation of homologous recombination. The AddA nuclease domain is required for chi fragment generation; this subunit has the helicase and 3' -&gt; 5' nuclease activities. This is ATP-dependent helicase/nuclease subunit A from Lactiplantibacillus plantarum (strain ATCC BAA-793 / NCIMB 8826 / WCFS1) (Lactobacillus plantarum).